A 206-amino-acid polypeptide reads, in one-letter code: Large ribosomal subunit protein uL4 (206 aa).

Residues arginine 44–serine 78 form a disordered region. The segment covering histidine 58–glycine 70 has biased composition (basic residues).

The protein belongs to the universal ribosomal protein uL4 family. As to quaternary structure, part of the 50S ribosomal subunit.

In terms of biological role, one of the primary rRNA binding proteins, this protein initially binds near the 5'-end of the 23S rRNA. It is important during the early stages of 50S assembly. It makes multiple contacts with different domains of the 23S rRNA in the assembled 50S subunit and ribosome. Functionally, forms part of the polypeptide exit tunnel. This Paraburkholderia phytofirmans (strain DSM 17436 / LMG 22146 / PsJN) (Burkholderia phytofirmans) protein is Large ribosomal subunit protein uL4.